The sequence spans 154 residues: Crossover junction endodeoxyribonuclease RuvC (154 aa).

Active-site residues include Asp7, Glu66, and Asp139. Residues Asp7, Glu66, and Asp139 each coordinate Mg(2+).

It belongs to the RuvC family. In terms of assembly, homodimer which binds Holliday junction (HJ) DNA. The HJ becomes 2-fold symmetrical on binding to RuvC with unstacked arms; it has a different conformation from HJ DNA in complex with RuvA. In the full resolvosome a probable DNA-RuvA(4)-RuvB(12)-RuvC(2) complex forms which resolves the HJ. Requires Mg(2+) as cofactor.

The protein resides in the cytoplasm. It catalyses the reaction Endonucleolytic cleavage at a junction such as a reciprocal single-stranded crossover between two homologous DNA duplexes (Holliday junction).. The RuvA-RuvB-RuvC complex processes Holliday junction (HJ) DNA during genetic recombination and DNA repair. Endonuclease that resolves HJ intermediates. Cleaves cruciform DNA by making single-stranded nicks across the HJ at symmetrical positions within the homologous arms, yielding a 5'-phosphate and a 3'-hydroxyl group; requires a central core of homology in the junction. The consensus cleavage sequence is 5'-(A/T)TT(C/G)-3'. Cleavage occurs on the 3'-side of the TT dinucleotide at the point of strand exchange. HJ branch migration catalyzed by RuvA-RuvB allows RuvC to scan DNA until it finds its consensus sequence, where it cleaves and resolves the cruciform DNA. The chain is Crossover junction endodeoxyribonuclease RuvC from Aliarcobacter butzleri (strain RM4018) (Arcobacter butzleri).